A 337-amino-acid chain; its full sequence is Heme A synthase (337 aa).

The next 5 helical transmembrane spans lie at 6–26 (ITKW…IGGI), 87–107 (FIHR…LIYF), 119–139 (LPYI…WYMV), 154–174 (LAFH…QLIK), and 192–212 (LIFS…GALV). Position 256 (histidine 256) interacts with heme. The next 3 helical transmembrane spans lie at 258–278 (LVGY…LKIE), 285–305 (IAYF…LTLL), and 308–328 (VPII…SIII). Histidine 316 contacts heme.

It belongs to the COX15/CtaA family. Type 2 subfamily. As to quaternary structure, interacts with CtaB. The cofactor is heme b.

Its subcellular location is the cell membrane. The catalysed reaction is Fe(II)-heme o + 2 A + H2O = Fe(II)-heme a + 2 AH2. Its pathway is porphyrin-containing compound metabolism; heme A biosynthesis; heme A from heme O: step 1/1. Functionally, catalyzes the conversion of heme O to heme A by two successive hydroxylations of the methyl group at C8. The first hydroxylation forms heme I, the second hydroxylation results in an unstable dihydroxymethyl group, which spontaneously dehydrates, resulting in the formyl group of heme A. In Rickettsia conorii (strain ATCC VR-613 / Malish 7), this protein is Heme A synthase.